A 220-amino-acid polypeptide reads, in one-letter code: UPF0319 protein YccT (220 aa).

Positions 1-20 are cleaved as a signal peptide; it reads MKTGALATFLALCLPVTVFA.

The protein belongs to the UPF0319 family.

This Salmonella paratyphi A (strain ATCC 9150 / SARB42) protein is UPF0319 protein YccT.